The chain runs to 653 residues: Cytidine monophosphate-N-acetylneuraminic acid hydroxylase (653 aa).

In terms of domain architecture, Rieske spans 11-120 (LSPEETSELK…PEYNEDGSLD (110 aa)). [2Fe-2S] cluster is bound by residues cysteine 62, histidine 64, cysteine 83, and histidine 86. Positions 596 to 622 (WNPSQATPAVEAKDPSSDSKDSATKPG) are disordered. A compositionally biased stretch (basic and acidic residues) spans 606–618 (EAKDPSSDSKDSA). The chain crosses the membrane as a helical span at residues 630-647 (LLRPLGIVVALVGVGVAI).

Belongs to the CMP-Neu5Ac hydroxylase family. Requires [2Fe-2S] cluster as cofactor.

The protein localises to the membrane. The catalysed reaction is CMP-N-acetyl-beta-neuraminate + 2 Fe(II)-[cytochrome b5] + O2 + 2 H(+) = CMP-N-glycoloyl-beta-neuraminate + 2 Fe(III)-[cytochrome b5] + H2O. The protein operates within amino-sugar metabolism; N-acetylneuraminate metabolism. Its function is as follows. Sialic acids are components of carbohydrate chains of glycoconjugates and are involved in cell-cell recognition and cell-pathogen interactions. Catalyzes the conversion of CMP-N-acetylneuraminic acid (CMP-Neu5Ac) into its hydroxylated derivative CMP-N-glycolylneuraminic acid (CMP-Neu5Gc), a sialic acid abundantly expressed at the surface of many cells. In Asterias rubens (Common European starfish), this protein is Cytidine monophosphate-N-acetylneuraminic acid hydroxylase (cnh).